The following is a 340-amino-acid chain: L-threonine 3-dehydrogenase (340 aa).

Cys-38 is a Zn(2+) binding site. Residues Thr-40 and His-43 each act as charge relay system in the active site. Zn(2+) is bound by residues His-63, Glu-64, Cys-93, Cys-96, Cys-99, and Cys-107. NAD(+) is bound by residues Ile-175, Asp-195, Arg-200, 261-263, and 285-286; these read LGI and IY.

This sequence belongs to the zinc-containing alcohol dehydrogenase family. Homotetramer. It depends on Zn(2+) as a cofactor.

Its subcellular location is the cytoplasm. The catalysed reaction is L-threonine + NAD(+) = (2S)-2-amino-3-oxobutanoate + NADH + H(+). The protein operates within amino-acid degradation; L-threonine degradation via oxydo-reductase pathway; glycine from L-threonine: step 1/2. Catalyzes the NAD(+)-dependent oxidation of L-threonine to 2-amino-3-ketobutyrate. The protein is L-threonine 3-dehydrogenase of Xanthomonas campestris pv. campestris (strain ATCC 33913 / DSM 3586 / NCPPB 528 / LMG 568 / P 25).